The sequence spans 378 residues: Probable S-(hydroxymethyl)glutathione dehydrogenase 1 (378 aa).

Cys-47 provides a ligand contact to Zn(2+). His-48 contacts NAD(+). Residues His-69, Glu-70, Cys-99, Cys-102, Cys-105, Cys-113, and Cys-176 each contribute to the Zn(2+) site. NAD(+)-binding positions include 201–206, Asp-225, 293–295, and 318–320; these read GCGCVG, IGV, and SAF.

This sequence belongs to the zinc-containing alcohol dehydrogenase family. Class-III subfamily. The cofactor is Zn(2+).

The catalysed reaction is a primary alcohol + NAD(+) = an aldehyde + NADH + H(+). It carries out the reaction a secondary alcohol + NAD(+) = a ketone + NADH + H(+). It catalyses the reaction S-(hydroxymethyl)glutathione + NADP(+) = S-formylglutathione + NADPH + H(+). The enzyme catalyses S-(hydroxymethyl)glutathione + NAD(+) = S-formylglutathione + NADH + H(+). The catalysed reaction is S-nitrosoglutathione + NADH + H(+) = S-(hydroxysulfenamide)glutathione + NAD(+). Oxidizes long-chain alcohols and, in the presence of glutathione, is able to oxidize formaldehyde. Also acts as a S-nitroso-glutathione reductase by catalyzing the NADH-dependent reduction of S-nitrosoglutathione, thereby regulating protein S-nitrosylation. The chain is Probable S-(hydroxymethyl)glutathione dehydrogenase 1 from Schizosaccharomyces pombe (strain 972 / ATCC 24843) (Fission yeast).